The primary structure comprises 182 residues: Ribulose bisphosphate carboxylase small subunit, chloroplastic 4 (182 aa).

A chloroplast-targeting transit peptide spans 1 to 41 (MSAAMMNKSVVLSKQCTKPAATPKVVTSKRSFASTVANKNR).

Belongs to the RuBisCO small chain family. In terms of assembly, heterohexadecamer of 8 large and 8 small subunits.

Its subcellular location is the plastid. It is found in the chloroplast. Functionally, ruBisCO catalyzes two reactions: the carboxylation of D-ribulose 1,5-bisphosphate, the primary event in carbon dioxide fixation, as well as the oxidative fragmentation of the pentose substrate. Both reactions occur simultaneously and in competition at the same active site. Although the small subunit is not catalytic it is essential for maximal activity. The sequence is that of Ribulose bisphosphate carboxylase small subunit, chloroplastic 4 from Acetabularia acetabulum (Mermaid's wine glass).